A 611-amino-acid chain; its full sequence is MARQKLTFKEQMDGFPWVQLVVVSLVRFSEPIAFSSLFPYVYFMVRDFNIAPNDAQVSKYSGYLSSSFALCQVISAYHWGRFSEKHGRKITLTCGLIGTSVSLLILGFSRNFYQALVARSLMGLLNGNVGVIRTIIGEIATERKHQALAFSTMPLLFQFGAVVGPMIGGFLVFRDGTMNEVPLWFPHFAKRIIRSYPYALPNVVVCMFLMFGLTNATLFLEETHPAFKDRRDYGLEVGDFIKKNIFGIQPKRRPWQKRIQDDSENIHHRNENVNSIRGQDSEEDENSPLVNTTNDDDTESIQSIDPILTRRQSVGLIRTYSLHEPTDAVHANIDTAPDGCKESSIFHHVFHTKVFYPISVNFIMALHLIVYNEFLPVFLAYDLAVDPENPKKLASKFPWKISGGIGYEPEQTGTLLSTTGIFGCFVVIFIFPIVDRNFDCLTIFRTLVKLYPIMYVMVPYVVFLQNERIPSWYTVVYLYIITGIKTFCGALTSPQIMLLIHNSSPLSCRSVINGATISISASARFIGPLVWGYIMSWSQQNDVAWVSWWSLSLFCMVALYQSYKIAPIDDNENELHGQGSEDAYNSQSQSSDLRMAHRSSLSSLSNQRCTT.

Residues 1-89 (MARQKLTFKE…GRFSEKHGRK (89 aa)) lie on the Extracellular side of the membrane. The chain crosses the membrane as a helical span at residues 90–110 (ITLTCGLIGTSVSLLILGFSR). The Cytoplasmic segment spans residues 111–152 (NFYQALVARSLMGLLNGNVGVIRTIIGEIATERKHQALAFST). Residues 153–173 (MPLLFQFGAVVGPMIGGFLVF) form a helical membrane-spanning segment. Topologically, residues 174 to 199 (RDGTMNEVPLWFPHFAKRIIRSYPYA) are extracellular. A helical transmembrane segment spans residues 200-220 (LPNVVVCMFLMFGLTNATLFL). Over 221–353 (EETHPAFKDR…SIFHHVFHTK (133 aa)) the chain is Cytoplasmic. Residues 261-271 (DDSENIHHRNE) show a composition bias toward basic and acidic residues. The disordered stretch occupies residues 261–301 (DDSENIHHRNENVNSIRGQDSEEDENSPLVNTTNDDDTESI). Ser-313 is subject to Phosphoserine. A helical transmembrane segment spans residues 354–372 (VFYPISVNFIMALHLIVYN). Residues 373 to 413 (EFLPVFLAYDLAVDPENPKKLASKFPWKISGGIGYEPEQTG) lie on the Extracellular side of the membrane. The helical transmembrane segment at 414-434 (TLLSTTGIFGCFVVIFIFPIV) threads the bilayer. Over 435-442 (DRNFDCLT) the chain is Cytoplasmic. Residues 443 to 463 (IFRTLVKLYPIMYVMVPYVVF) traverse the membrane as a helical segment. At 464-542 (LQNERIPSWY…YIMSWSQQND (79 aa)) the chain is on the extracellular side. The helical transmembrane segment at 543–563 (VAWVSWWSLSLFCMVALYQSY) threads the bilayer. Residues 564 to 611 (KIAPIDDNENELHGQGSEDAYNSQSQSSDLRMAHRSSLSSLSNQRCTT) are Cytoplasmic-facing. Ser-603 is subject to Phosphoserine.

The protein belongs to the major facilitator superfamily.

It localises to the membrane. It carries out the reaction chloride(in) = chloride(out). Its function is as follows. Outward-rectifying chloride channel involved in chloride homeostasis. The sequence is that of Major facilitator superfamily domain-containing protein YCR023C from Saccharomyces cerevisiae (strain ATCC 204508 / S288c) (Baker's yeast).